We begin with the raw amino-acid sequence, 464 residues long: Glycine--tRNA ligase (464 aa).

Residues Arg-104 and Glu-175 each contribute to the substrate site. ATP contacts are provided by residues Arg-207–Glu-209, Phe-217–Phe-222, Glu-292–Leu-293, and Gly-336–Arg-339. Phe-222 to Glu-226 contacts substrate. Position 332-336 (Glu-332–Gly-336) interacts with substrate.

Belongs to the class-II aminoacyl-tRNA synthetase family. Homodimer.

Its subcellular location is the cytoplasm. The catalysed reaction is tRNA(Gly) + glycine + ATP = glycyl-tRNA(Gly) + AMP + diphosphate. Catalyzes the attachment of glycine to tRNA(Gly). This Leptospira interrogans serogroup Icterohaemorrhagiae serovar Lai (strain 56601) protein is Glycine--tRNA ligase.